Reading from the N-terminus, the 602-residue chain is uncharacterized protein (602 aa).

The protein belongs to the IIV-6 098R family.

This is an uncharacterized protein from Acheta domesticus (House cricket).